A 340-amino-acid chain; its full sequence is DNA repair protein RAD51 homolog A (340 aa).

The span at 1-14 shows a compositional bias: low complexity; the sequence is MSSAAQQQQKAAAA. Residues 1 to 21 are disordered; sequence MSSAAQQQQKAAAAEQEEVEH. Residues 49–78 form the HhH domain; that stretch reads TVEAVAYTPRKDLLQIKGISEAKADKIIEA. An ATP-binding site is contributed by 128–135; that stretch reads GEFRSGKT.

Belongs to the RecA family. RAD51 subfamily. As to quaternary structure, self-associates and may interact with XRCC3 homolog. As to expression, highly expressed in mitotic and meiotic tissues, but low levels in differentiated tissues.

It localises to the nucleus. Its function is as follows. Binds to single and double-stranded DNA and exhibits DNA-dependent ATPase activity. Unwinds duplex DNA. Component of the meiotic recombination pathway. Seems to play a role in mediating chromosome homology search, chromosome pairing and synapsis at early stages and probably chromosome crossing-over at later stages in meiosis. Probably is involved in the repair of meiotic double strand breaks (DBSs) and in homologous recombination. This Zea mays (Maize) protein is DNA repair protein RAD51 homolog A (RAD51A).